The chain runs to 736 residues: Phosphoribosylformylglycinamidine synthase subunit PurL (736 aa).

H48 is a catalytic residue. 2 residues coordinate ATP: Y51 and K90. E92 is a Mg(2+) binding site. Residues 93-96 (SHNH) and R115 contribute to the substrate site. Catalysis depends on H94, which acts as the Proton acceptor. A Mg(2+)-binding site is contributed by D116. Position 239 (Q239) interacts with substrate. Mg(2+) is bound at residue D267. 311–313 (ESQ) is a substrate binding site. Residues D492 and G529 each contribute to the ATP site. Residue N530 participates in Mg(2+) binding. S532 provides a ligand contact to substrate.

This sequence belongs to the FGAMS family. As to quaternary structure, monomer. Part of the FGAM synthase complex composed of 1 PurL, 1 PurQ and 2 PurS subunits.

The protein localises to the cytoplasm. It carries out the reaction N(2)-formyl-N(1)-(5-phospho-beta-D-ribosyl)glycinamide + L-glutamine + ATP + H2O = 2-formamido-N(1)-(5-O-phospho-beta-D-ribosyl)acetamidine + L-glutamate + ADP + phosphate + H(+). It participates in purine metabolism; IMP biosynthesis via de novo pathway; 5-amino-1-(5-phospho-D-ribosyl)imidazole from N(2)-formyl-N(1)-(5-phospho-D-ribosyl)glycinamide: step 1/2. Functionally, part of the phosphoribosylformylglycinamidine synthase complex involved in the purines biosynthetic pathway. Catalyzes the ATP-dependent conversion of formylglycinamide ribonucleotide (FGAR) and glutamine to yield formylglycinamidine ribonucleotide (FGAM) and glutamate. The FGAM synthase complex is composed of three subunits. PurQ produces an ammonia molecule by converting glutamine to glutamate. PurL transfers the ammonia molecule to FGAR to form FGAM in an ATP-dependent manner. PurS interacts with PurQ and PurL and is thought to assist in the transfer of the ammonia molecule from PurQ to PurL. This chain is Phosphoribosylformylglycinamidine synthase subunit PurL, found in Bradyrhizobium sp. (strain ORS 278).